The primary structure comprises 37 residues: Large ribosomal subunit protein bL36 (37 aa).

Belongs to the bacterial ribosomal protein bL36 family.

This is Large ribosomal subunit protein bL36 from Acidovorax ebreus (strain TPSY) (Diaphorobacter sp. (strain TPSY)).